The following is a 424-amino-acid chain: Serine--tRNA ligase (424 aa).

L-serine is bound at residue 233–235 (TAE). Position 264 to 266 (264 to 266 (RKE)) interacts with ATP. Glu287 provides a ligand contact to L-serine. 351 to 354 (EISS) lines the ATP pocket. Ser386 serves as a coordination point for L-serine.

It belongs to the class-II aminoacyl-tRNA synthetase family. Type-1 seryl-tRNA synthetase subfamily. As to quaternary structure, homodimer. The tRNA molecule binds across the dimer.

Its subcellular location is the cytoplasm. It catalyses the reaction tRNA(Ser) + L-serine + ATP = L-seryl-tRNA(Ser) + AMP + diphosphate + H(+). The enzyme catalyses tRNA(Sec) + L-serine + ATP = L-seryl-tRNA(Sec) + AMP + diphosphate + H(+). It functions in the pathway aminoacyl-tRNA biosynthesis; selenocysteinyl-tRNA(Sec) biosynthesis; L-seryl-tRNA(Sec) from L-serine and tRNA(Sec): step 1/1. In terms of biological role, catalyzes the attachment of serine to tRNA(Ser). Is also able to aminoacylate tRNA(Sec) with serine, to form the misacylated tRNA L-seryl-tRNA(Sec), which will be further converted into selenocysteinyl-tRNA(Sec). The polypeptide is Serine--tRNA ligase (Elusimicrobium minutum (strain Pei191)).